The following is an 840-amino-acid chain: Probable alpha-glucuronidase A (840 aa).

An N-terminal signal peptide occupies residues 1-19 (MRSVITTLTLVASVGLAVA). Asn-222, Asn-310, Asn-465, Asn-527, Asn-576, Asn-682, and Asn-732 each carry an N-linked (GlcNAc...) asparagine glycan.

The protein belongs to the glycosyl hydrolase 67 family.

Its subcellular location is the secreted. It catalyses the reaction an alpha-D-glucuronoside + H2O = D-glucuronate + an alcohol. Its function is as follows. Alpha-glucuronidase involved in the hydrolysis of xylan, a major structural heterogeneous polysaccharide found in plant biomass representing the second most abundant polysaccharide in the biosphere, after cellulose. Releases 4-O-methylglucuronic acid from xylan. This Aspergillus clavatus (strain ATCC 1007 / CBS 513.65 / DSM 816 / NCTC 3887 / NRRL 1 / QM 1276 / 107) protein is Probable alpha-glucuronidase A (aguA).